A 102-amino-acid polypeptide reads, in one-letter code: Small ribosomal subunit protein eS24 (102 aa).

The protein belongs to the eukaryotic ribosomal protein eS24 family.

The polypeptide is Small ribosomal subunit protein eS24 (Methanococcus maripaludis (strain DSM 14266 / JCM 13030 / NBRC 101832 / S2 / LL)).